Reading from the N-terminus, the 147-residue chain is Hemoglobin subunit gamma-1 (147 aa).

Position 2 is an N-acetylglycine (Gly2). The 145-residue stretch at 3–147 folds into the Globin domain; it reads HFTEEDKATI…VASALSSRYH (145 aa). Thr13 is modified (phosphothreonine). A phosphoserine mark is found at Ser45, Ser51, and Ser53. Lys60 is modified (N6-acetyllysine). His64 contacts heme b. Lys83 carries the post-translational modification N6-acetyllysine. His93 contributes to the heme b binding site. S-nitrosocysteine is present on Cys94. Ser140 is modified (phosphoserine).

It belongs to the globin family. As to quaternary structure, heterotetramer of two alpha chains and two gamma chains in fetal hemoglobin (Hb F). Red blood cells.

Functionally, gamma chains make up the fetal hemoglobin F, in combination with alpha chains. This chain is Hemoglobin subunit gamma-1 (HBG1), found in Gorilla gorilla gorilla (Western lowland gorilla).